A 163-amino-acid polypeptide reads, in one-letter code: Nucleotide-binding protein YajQ (163 aa).

This sequence belongs to the YajQ family.

Nucleotide-binding protein. The sequence is that of Nucleotide-binding protein YajQ from Salmonella agona (strain SL483).